A 341-amino-acid polypeptide reads, in one-letter code: L-threonine 3-dehydrogenase (341 aa).

C38 is a Zn(2+) binding site. Residues T40 and H43 each act as charge relay system in the active site. Residues H63, E64, C93, C96, C99, and C107 each contribute to the Zn(2+) site. NAD(+)-binding positions include I175, D195, R200, L262 to I264, and I286 to Y287.

The protein belongs to the zinc-containing alcohol dehydrogenase family. In terms of assembly, homotetramer. Zn(2+) serves as cofactor.

The protein resides in the cytoplasm. The catalysed reaction is L-threonine + NAD(+) = (2S)-2-amino-3-oxobutanoate + NADH + H(+). Its pathway is amino-acid degradation; L-threonine degradation via oxydo-reductase pathway; glycine from L-threonine: step 1/2. In terms of biological role, catalyzes the NAD(+)-dependent oxidation of L-threonine to 2-amino-3-ketobutyrate. The sequence is that of L-threonine 3-dehydrogenase from Klebsiella pneumoniae subsp. pneumoniae (strain ATCC 700721 / MGH 78578).